A 435-amino-acid polypeptide reads, in one-letter code: Histidinol dehydrogenase (435 aa).

NAD(+) is bound by residues Y131, Q189, and N212. Substrate is bound by residues S238, Q260, and H263. Zn(2+)-binding residues include Q260 and H263. Residues E327 and H328 each act as proton acceptor in the active site. Residues H328, D361, E415, and H420 each coordinate substrate. D361 provides a ligand contact to Zn(2+). H420 is a Zn(2+) binding site.

The protein belongs to the histidinol dehydrogenase family. As to quaternary structure, homodimer. It depends on Zn(2+) as a cofactor.

The enzyme catalyses L-histidinol + 2 NAD(+) + H2O = L-histidine + 2 NADH + 3 H(+). It functions in the pathway amino-acid biosynthesis; L-histidine biosynthesis; L-histidine from 5-phospho-alpha-D-ribose 1-diphosphate: step 9/9. Functionally, catalyzes the sequential NAD-dependent oxidations of L-histidinol to L-histidinaldehyde and then to L-histidine. This Buchnera aphidicola subsp. Acyrthosiphon pisum (strain APS) (Acyrthosiphon pisum symbiotic bacterium) protein is Histidinol dehydrogenase (hisD).